Here is a 662-residue protein sequence, read N- to C-terminus: DNA ligase (662 aa).

NAD(+) is bound by residues 31-35 and 79-80; these read DKDYD and SL. K121 acts as the N6-AMP-lysine intermediate in catalysis. NAD(+) is bound by residues R143, E177, and K313. Positions 406, 409, 422, and 428 each coordinate Zn(2+). Positions 586–662 constitute a BRCT domain; the sequence is VLESPFMGKT…LSEEEFENMI (77 aa).

Belongs to the NAD-dependent DNA ligase family. LigA subfamily. It depends on Mg(2+) as a cofactor. The cofactor is Mn(2+).

The catalysed reaction is NAD(+) + (deoxyribonucleotide)n-3'-hydroxyl + 5'-phospho-(deoxyribonucleotide)m = (deoxyribonucleotide)n+m + AMP + beta-nicotinamide D-nucleotide.. DNA ligase that catalyzes the formation of phosphodiester linkages between 5'-phosphoryl and 3'-hydroxyl groups in double-stranded DNA using NAD as a coenzyme and as the energy source for the reaction. It is essential for DNA replication and repair of damaged DNA. In Clostridium perfringens (strain SM101 / Type A), this protein is DNA ligase.